We begin with the raw amino-acid sequence, 306 residues long: Acetyl-coenzyme A carboxylase carboxyl transferase subunit beta (306 aa).

Positions 25–294 (LWIKDPTSGE…VVNPSNTSST (270 aa)) constitute a CoA carboxyltransferase N-terminal domain. Residues 287–296 (NPSNTSSTNS) show a composition bias toward low complexity. The tract at residues 287 to 306 (NPSNTSSTNSQASLSKAEAA) is disordered.

The protein belongs to the AccD/PCCB family. Acetyl-CoA carboxylase is a heterohexamer composed of biotin carboxyl carrier protein (AccB), biotin carboxylase (AccC) and two subunits each of ACCase subunit alpha (AccA) and ACCase subunit beta (AccD).

The protein localises to the cytoplasm. The enzyme catalyses N(6)-carboxybiotinyl-L-lysyl-[protein] + acetyl-CoA = N(6)-biotinyl-L-lysyl-[protein] + malonyl-CoA. It functions in the pathway lipid metabolism; malonyl-CoA biosynthesis; malonyl-CoA from acetyl-CoA: step 1/1. In terms of biological role, component of the acetyl coenzyme A carboxylase (ACC) complex. Biotin carboxylase (BC) catalyzes the carboxylation of biotin on its carrier protein (BCCP) and then the CO(2) group is transferred by the transcarboxylase to acetyl-CoA to form malonyl-CoA. This chain is Acetyl-coenzyme A carboxylase carboxyl transferase subunit beta, found in Bartonella henselae (strain ATCC 49882 / DSM 28221 / CCUG 30454 / Houston 1) (Rochalimaea henselae).